Here is a 1061-residue protein sequence, read N- to C-terminus: Protein pid-5 (1061 aa).

Belongs to the peptidase M24B family. As to quaternary structure, may interact with pid-2, app-1 and prmt-5.

The protein resides in the cytoplasm. It is found in the perinuclear region. The protein localises to the P-body. Its function is as follows. Together with pid-4, it is involved in gene silencing mediated by a class of 21 nucleotide PIWI-interacting RNAs (piRNAs) that possess a uracil residue at the 5'-end (also called 21U-RNAs) and guide the Piwi protein prg-1 to its DNA targets for silencing. Together with pid-4, it is required for the biogenesis of secondary and tertiary 22G-siRNAs. Specifically, promotes the production of 22G-siRNAs from the 5' end of target mRNAs. Together with pid-4, plays a role in small RNA-directed transgenerational epigenetic inheritance (also called RNAe) over several generations and germline immortality. Together with pid-4, plays a role in the formation of liquid-like condensates in the cytoplasm called Z granules. The sequence is that of Protein pid-5 from Caenorhabditis elegans.